Reading from the N-terminus, the 347-residue chain is 4-hydroxy-2-oxovalerate aldolase (347 aa).

In terms of domain architecture, Pyruvate carboxyltransferase spans 2 to 252 (ILISDATLRD…DTRTTFERVM (251 aa)). 10 to 11 (RD) contributes to the substrate binding site. Residue aspartate 11 coordinates Mn(2+). Histidine 14 functions as the Proton acceptor in the catalytic mechanism. Residues serine 164 and histidine 191 each coordinate substrate. 2 residues coordinate Mn(2+): histidine 191 and histidine 193.

This sequence belongs to the 4-hydroxy-2-oxovalerate aldolase family.

The catalysed reaction is (S)-4-hydroxy-2-oxopentanoate = acetaldehyde + pyruvate. The chain is 4-hydroxy-2-oxovalerate aldolase (mhpE) from Burkholderia pseudomallei (strain 1710b).